The primary structure comprises 166 residues: Sperm-egg fusion protein TMEM95 (166 aa).

A signal peptide spans 1–16; the sequence is MWTLALGGIFLAAVEA. Intrachain disulfides connect cysteine 17-cysteine 118, cysteine 20-cysteine 121, cysteine 105-cysteine 128, and cysteine 109-cysteine 134. The Extracellular portion of the chain corresponds to 17-145; sequence CVFCRFPDRE…PGSHDLWEAR (129 aa). N-linked (GlcNAc...) asparagine glycosylation is present at asparagine 117. The chain crosses the membrane as a helical span at residues 146-165; the sequence is ILLLFVCGTALLLGVPSLAV. Position 166 (glutamate 166) is a topological domain, cytoplasmic.

It belongs to the TMEM95 family. Does not interact with sperm-egg fusion proteins IZUMO1 or IZUMO1R/JUNO. In terms of processing, N-glycosylated. Detected in testis and brain with higher levels in brain than testis.

The protein localises to the cytoplasmic vesicle. Its subcellular location is the secretory vesicle. The protein resides in the acrosome membrane. Sperm protein required for fusion of sperm with the egg membrane during fertilization. This Bos taurus (Bovine) protein is Sperm-egg fusion protein TMEM95.